Consider the following 337-residue polypeptide: GTPase Obg (337 aa).

In terms of domain architecture, Obg spans 1–158; that stretch reads MFIDEVRILV…KRLRLELKLL (158 aa). 2 stretches are compositionally biased toward basic and acidic residues: residues 61 to 74 and 137 to 146; these read NPEHKAERGRHGEG and PTEHEPGRPG. 2 disordered regions span residues 61 to 83 and 119 to 146; these read NPEHKAERGRHGEGSQRTGAEGR and GGRGGRGNQHFATPTHQAPTEHEPGRPG. One can recognise an OBG-type G domain in the interval 159–330; that stretch reads ADVGLVGFPN…LKHAMADRVL (172 aa). Residues 165–172, 190–194, 212–215, 282–285, and 311–313 each bind GTP; these read GFPNAGKS, FTTLE, DIPG, TKMD, and SSA. Ser172 and Thr192 together coordinate Mg(2+).

The protein belongs to the TRAFAC class OBG-HflX-like GTPase superfamily. OBG GTPase family. Monomer. Mg(2+) is required as a cofactor.

It localises to the cytoplasm. An essential GTPase which binds GTP, GDP and possibly (p)ppGpp with moderate affinity, with high nucleotide exchange rates and a fairly low GTP hydrolysis rate. Plays a role in control of the cell cycle, stress response, ribosome biogenesis and in those bacteria that undergo differentiation, in morphogenesis control. This chain is GTPase Obg, found in Solibacter usitatus (strain Ellin6076).